We begin with the raw amino-acid sequence, 398 residues long: Proteasome-activating nucleotidase (398 aa).

A coiled-coil region spans residues 3 to 60; it reads DSEIQYLLEKLKKLEEDYYKLRELYRRLEDEKKFIESERIRYEREVRRLRSEVERLRS. ATP contacts are provided by residues 185–190 and H324; that span reads GTGKTL. Positions 396–398 are docks into pockets in the proteasome alpha-ring to cause gate opening; that stretch reads MFV.

Belongs to the AAA ATPase family. In terms of assembly, homohexamer. The hexameric complex has a two-ring architecture resembling a top hat that caps the 20S proteasome core at one or both ends. Upon ATP-binding, the C-terminus of PAN interacts with the alpha-rings of the proteasome core by binding to the intersubunit pockets.

It localises to the cytoplasm. Its function is as follows. ATPase which is responsible for recognizing, binding, unfolding and translocation of substrate proteins into the archaeal 20S proteasome core particle. Is essential for opening the gate of the 20S proteasome via an interaction with its C-terminus, thereby allowing substrate entry and access to the site of proteolysis. Thus, the C-termini of the proteasomal ATPase function like a 'key in a lock' to induce gate opening and therefore regulate proteolysis. Unfolding activity requires energy from ATP hydrolysis, whereas ATP binding alone promotes ATPase-20S proteasome association which triggers gate opening, and supports translocation of unfolded substrates. This Archaeoglobus fulgidus (strain ATCC 49558 / DSM 4304 / JCM 9628 / NBRC 100126 / VC-16) protein is Proteasome-activating nucleotidase.